The chain runs to 447 residues: Serine/threonine-protein phosphatase 2A 55 kDa regulatory subunit B gamma isoform (447 aa).

WD repeat units follow at residues 22–61 (TEADIISTVEFNHTGELLATGDKGGRVVIFQREPESKNAP), 87–128 (EIEE…KRPE), 171–209 (GHTYHINSISVNSDCETYMSADDLRINLWHLAITDRSFN), 220–260 (DLTE…LCDK), 279–317 (EIISSVSDVKFSHSGRYMLTRDYLTVKVWDLNMEARPIE), 334–375 (ENDC…DVTL), and 410–446 (DFTKKILHTAWHPAENIIAIAATNNLYIFQDKVNSDM).

It belongs to the phosphatase 2A regulatory subunit B family. In terms of assembly, PP2A consists of a common heterodimeric core enzyme, composed of a 36 kDa catalytic subunit (subunit C) and a 65 kDa constant regulatory subunit (PR65 or subunit A), that associates with a variety of regulatory subunits. Proteins that associate with the core dimer include three families of regulatory subunits B (the R2/B/PR55/B55, R3/B''/PR72/PR130/PR59 and R5/B'/B56 families), the 48 kDa variable regulatory subunit, viral proteins, and cell signaling molecules. Interacts with IER5.

The B regulatory subunit might modulate substrate selectivity and catalytic activity, and might also direct the localization of the catalytic enzyme to a particular subcellular compartment. The polypeptide is Serine/threonine-protein phosphatase 2A 55 kDa regulatory subunit B gamma isoform (PPP2R2C) (Homo sapiens (Human)).